The sequence spans 283 residues: Gap junction beta-1 protein (283 aa).

The Cytoplasmic portion of the chain corresponds to 1–22 (MNWTGLYTLLSGVNRHSTAIGR). Residues 23 to 45 (VWLSVIFIFRIMVLVVAAESVWG) form a helical membrane-spanning segment. The Extracellular segment spans residues 46–75 (DEKSSFICNTLQPGCNSVCYDHFFPISHVR). A helical transmembrane segment spans residues 76-95 (LWSLQLILVSTPALLVAMHV). The Cytoplasmic portion of the chain corresponds to 96-130 (AHQQHIEKKMLRLEGHGDPLHLEEVKRHKVHISGT). A helical transmembrane segment spans residues 131-153 (LWWTYVISVVFRLLFEAVFMYVF). At 154 to 191 (YLLYPGYAMVRLVKCEAFPCPNTVDCFVSRPTEKTVFT) the chain is on the extracellular side. A helical membrane pass occupies residues 192-214 (VFMLAASGICIILNVAEVVYLII). Residues 215–283 (RACARRAQRR…AEKSDRCSAC (69 aa)) are Cytoplasmic-facing. Serine 233, serine 258, serine 266, and serine 277 each carry phosphoserine.

Belongs to the connexin family. Beta-type (group I) subfamily. A connexon is composed of a hexamer of connexins. Interacts with CNST.

Its subcellular location is the cell membrane. It is found in the cell junction. The protein localises to the gap junction. Functionally, one gap junction consists of a cluster of closely packed pairs of transmembrane channels, the connexons, through which materials of low MW diffuse from one cell to a neighboring cell. The sequence is that of Gap junction beta-1 protein (Gjb1) from Mus musculus (Mouse).